The sequence spans 361 residues: 3-dehydroquinate synthase (361 aa).

Belongs to the archaeal-type DHQ synthase family.

It catalyses the reaction 2-amino-2,3,7-trideoxy-D-lyxo-hept-6-ulosonate + NAD(+) + H2O = 3-dehydroquinate + NH4(+) + NADH + H(+). Catalyzes the oxidative deamination and cyclization of 2-amino-3,7-dideoxy-D-threo-hept-6-ulosonic acid (ADH) to yield 3-dehydroquinate (DHQ), which is fed into the canonical shikimic pathway of aromatic amino acid biosynthesis. In Methanocaldococcus jannaschii (strain ATCC 43067 / DSM 2661 / JAL-1 / JCM 10045 / NBRC 100440) (Methanococcus jannaschii), this protein is 3-dehydroquinate synthase (aroB').